Consider the following 614-residue polypeptide: Sorting nexin-18 (614 aa).

Residues 1–61 (MALRARALYD…PASYVQVIRA (61 aa)) form the SH3 domain. Positions 85–218 (GFEPLPAAPP…SQELGHGEPQ (134 aa)) are disordered. Residues 90–101 (PAAPPAAFPPLL) are compositionally biased toward pro residues. Positions 141–151 (SDDDWDDEWDD) are enriched in acidic residues. The region spanning 266 to 376 (FQCTIDDPTK…HFLTCPSSTD (111 aa)) is the PX domain. A 1,2-diacyl-sn-glycero-3-phospho-(1D-myo-inositol-4,5-bisphosphate) contacts are provided by arginine 302, lysine 304, and arginine 342. In terms of domain architecture, BAR spans 411–614 (LQEVESKIDG…EEALHKYDSV (204 aa)).

The protein belongs to the sorting nexin family. In terms of assembly, heterodimer with SNX9. Interacts with ITCH. Interacts with dynamin-2 (DNM2), SYNJ1 and WASL. Interacts with the AP-1 complex. Interacts with FCHSD1 (via the F-BAR domain).

Its subcellular location is the endomembrane system. The protein resides in the endosome membrane. The protein localises to the recycling endosome membrane. It localises to the cell membrane. It is found in the cytoplasmic vesicle membrane. In terms of biological role, involved in endocytosis and intracellular vesicle trafficking, both during interphase and at the end of mitosis. Required for efficient progress through mitosis and cytokinesis. Required for normal formation of the cleavage furrow at the end of mitosis. Plays a role in endocytosis via clathrin-coated pits, but also clathrin-independent, actin-dependent fluid-phase endocytosis. Plays a role in macropinocytosis. Binds to membranes enriched in phosphatidylinositol 4,5-bisphosphate and promotes membrane tubulation. Stimulates the GTPase activity of DNM2. Promotes DNM2 location at the plasma membrane. Together with DNM2, involved in autophagosome assembly by regulating trafficking from recycling endosomes of phospholipid scramblase ATG9A. This is Sorting nexin-18 from Mus musculus (Mouse).